The sequence spans 1392 residues: DNA-directed RNA polymerase subunit beta'' (1392 aa).

The Zn(2+) site is built by C224, C295, C302, and C305.

It belongs to the RNA polymerase beta' chain family. RpoC2 subfamily. As to quaternary structure, in plastids the minimal PEP RNA polymerase catalytic core is composed of four subunits: alpha, beta, beta', and beta''. When a (nuclear-encoded) sigma factor is associated with the core the holoenzyme is formed, which can initiate transcription. The cofactor is Zn(2+).

It localises to the plastid. Its subcellular location is the chloroplast. It catalyses the reaction RNA(n) + a ribonucleoside 5'-triphosphate = RNA(n+1) + diphosphate. In terms of biological role, DNA-dependent RNA polymerase catalyzes the transcription of DNA into RNA using the four ribonucleoside triphosphates as substrates. In Solanum bulbocastanum (Wild potato), this protein is DNA-directed RNA polymerase subunit beta''.